We begin with the raw amino-acid sequence, 308 residues long: MVRKNKINRASGTTKHLKDFPSVILSLPSYNPSILSKNATALITGGSSGLGFELAKELSRRINKVIVADIQSFPTFAQVEYNNIFYYQCDITSLDEIKNLKKAIERDHGNINIIINNAGVAHIKKLEHMTNKEVEQLIDINLIGAYRIISTFAEDMIDNREGFIINIASVLGELTPARLTSYGASKGAMIGFHKCMSRHFRSLSTECNKTGIKTLLVCPGKIKTNMFIDVPTPSKLLAPDIIPSQLALAIISAMEHNHLQTLNAPYYVNLVPFFKTLSWPYRHLLKHFSGMDHVTSTSPRAINPKRSA.

Leucine 50, aspartate 90, asparagine 117, tyrosine 182, lysine 186, isoleucine 222, and threonine 224 together coordinate NADP(+). The active-site Proton acceptor is the tyrosine 182. Lysine 186 serves as the catalytic Lowers pKa of active site Tyr.

The protein belongs to the short-chain dehydrogenases/reductases (SDR) family.

This is an uncharacterized protein from Saccharomyces cerevisiae (strain ATCC 204508 / S288c) (Baker's yeast).